We begin with the raw amino-acid sequence, 363 residues long: Fructose-1,6-bisphosphatase 1 (363 aa).

Valine 2 carries the N-acetylvaline modification. Residues 18-22 (VLEEG) and 28-32 (TGEMT) contribute to the AMP site. Positions 69 and 98 each coordinate Mg(2+). An AMP-binding site is contributed by 113-114 (KY). 3 residues coordinate Mg(2+): aspartate 119, leucine 121, and aspartate 122. 122 to 125 (DGSS) contributes to the substrate binding site. Arginine 141 contacts AMP. Lysine 151 is modified (N6-succinyllysine). Residues 213–216 (NEGY), 244–249 (RYVGSM), tyrosine 265, and 275–277 (KLR) each bind substrate. Phosphotyrosine occurs at positions 216, 245, and 265. Mg(2+) is bound at residue glutamate 281. Serine 339 and serine 353 each carry phosphoserine.

This sequence belongs to the FBPase class 1 family. In terms of assembly, homotetramer. Mg(2+) serves as cofactor.

The enzyme catalyses beta-D-fructose 1,6-bisphosphate + H2O = beta-D-fructose 6-phosphate + phosphate. Its pathway is carbohydrate biosynthesis; gluconeogenesis. With respect to regulation, subject to complex allosteric regulation. The enzyme can assume an active R-state, or an inactive T-state. Intermediate conformations may exist. AMP acts as an allosteric inhibitor. AMP binding affects the turnover of bound substrate and not the affinity for substrate. Fructose 2,6-bisphosphate acts as a competitive inhibitor. Fructose 2,6-bisphosphate and AMP have synergistic effects. Its function is as follows. Catalyzes the hydrolysis of fructose 1,6-bisphosphate to fructose 6-phosphate in the presence of divalent cations, acting as a rate-limiting enzyme in gluconeogenesis. Plays a role in regulating glucose sensing and insulin secretion of pancreatic beta-cells. Appears to modulate glycerol gluconeogenesis in liver. Important regulator of appetite and adiposity; increased expression of the protein in liver after nutrient excess increases circulating satiety hormones and reduces appetite-stimulating neuropeptides and thus seems to provide a feedback mechanism to limit weight gain. The sequence is that of Fructose-1,6-bisphosphatase 1 (Fbp1) from Rattus norvegicus (Rat).